The chain runs to 75 residues: Carwaprin-a (75 aa).

A signal peptide spans 1-24 (MSSGGLLLLLGLLTLWAELTPISG). In terms of domain architecture, WAP spans 27–72 (RPKKPGLCPPRPQKPPCVRECKNDWRCPGEQKCCRYGCIYECRDPI). Disulfide bonds link Cys34/Cys60, Cys43/Cys64, Cys47/Cys59, and Cys53/Cys68.

The protein belongs to the venom waprin family. Expressed by the venom gland.

It is found in the secreted. In terms of biological role, damages membranes of susceptible bacteria. Has no hemolytic activity. Not toxic to mice. Does not inhibit the proteinases elastase and cathepsin G. The polypeptide is Carwaprin-a (Tropidechis carinatus (Australian rough-scaled snake)).